The primary structure comprises 431 residues: Adenylosuccinate synthetase (431 aa).

Residues 12–18 and 40–42 contribute to the GTP site; these read GDEGKGK and GHT. The active-site Proton acceptor is aspartate 13. Mg(2+) contacts are provided by aspartate 13 and glycine 40. Residues 13 to 16, 38 to 41, threonine 129, arginine 143, glutamine 224, threonine 239, and arginine 303 each bind IMP; these read DEGK and NAGH. Histidine 41 functions as the Proton donor in the catalytic mechanism. 299-305 is a substrate binding site; that stretch reads VTTGRAR. GTP is bound by residues arginine 305, 331 to 333, and 413 to 415; these read KLD and GVG.

The protein belongs to the adenylosuccinate synthetase family. As to quaternary structure, homodimer. Mg(2+) serves as cofactor.

The protein resides in the cytoplasm. It carries out the reaction IMP + L-aspartate + GTP = N(6)-(1,2-dicarboxyethyl)-AMP + GDP + phosphate + 2 H(+). It participates in purine metabolism; AMP biosynthesis via de novo pathway; AMP from IMP: step 1/2. In terms of biological role, plays an important role in the de novo pathway of purine nucleotide biosynthesis. Catalyzes the first committed step in the biosynthesis of AMP from IMP. This Mycolicibacterium vanbaalenii (strain DSM 7251 / JCM 13017 / BCRC 16820 / KCTC 9966 / NRRL B-24157 / PYR-1) (Mycobacterium vanbaalenii) protein is Adenylosuccinate synthetase.